The following is a 69-amino-acid chain: Conotoxin Eb6.21 (69 aa).

The N-terminal stretch at 1–17 (VLIIAVLFLTACQLTTA) is a signal peptide. A propeptide spanning residues 18 to 41 (ETYSRGRQKHRARRSTDKNSKWTR) is cleaved from the precursor. Cystine bridges form between C43-C57, C50-C61, and C56-C68.

It belongs to the conotoxin O1 superfamily. In terms of tissue distribution, expressed by the venom duct.

Its subcellular location is the secreted. The chain is Conotoxin Eb6.21 (E1) from Conus ebraeus (Hebrew cone).